Consider the following 571-residue polypeptide: Proline--tRNA ligase (571 aa).

The protein belongs to the class-II aminoacyl-tRNA synthetase family. ProS type 1 subfamily. As to quaternary structure, homodimer.

It localises to the cytoplasm. It carries out the reaction tRNA(Pro) + L-proline + ATP = L-prolyl-tRNA(Pro) + AMP + diphosphate. In terms of biological role, catalyzes the attachment of proline to tRNA(Pro) in a two-step reaction: proline is first activated by ATP to form Pro-AMP and then transferred to the acceptor end of tRNA(Pro). As ProRS can inadvertently accommodate and process non-cognate amino acids such as alanine and cysteine, to avoid such errors it has two additional distinct editing activities against alanine. One activity is designated as 'pretransfer' editing and involves the tRNA(Pro)-independent hydrolysis of activated Ala-AMP. The other activity is designated 'posttransfer' editing and involves deacylation of mischarged Ala-tRNA(Pro). The misacylated Cys-tRNA(Pro) is not edited by ProRS. The polypeptide is Proline--tRNA ligase (Pseudomonas fluorescens (strain ATCC BAA-477 / NRRL B-23932 / Pf-5)).